A 75-amino-acid chain; its full sequence is Metallothionein-like protein 1 (75 aa).

The protein belongs to the metallothionein superfamily. Type 15 family.

In terms of biological role, metallothioneins have a high content of cysteine residues that bind various heavy metals. This Pisum sativum (Garden pea) protein is Metallothionein-like protein 1 (MTA).